The primary structure comprises 220 residues: Endonuclease NucS (220 aa).

Belongs to the NucS endonuclease family.

It is found in the cytoplasm. In terms of biological role, cleaves both 3' and 5' ssDNA extremities of branched DNA structures. The chain is Endonuclease NucS from Parafrankia sp. (strain EAN1pec).